The sequence spans 135 residues: Small ribosomal subunit protein uS9 (135 aa).

Basic and acidic residues predominate over residues 107–118; that stretch reads LVGDPRRTEPHK. Residues 107 to 135 form a disordered region; the sequence is LVGDPRRTEPHKPNRSTKGPRAKRQKSYR. The span at 119–135 shows a compositional bias: basic residues; it reads PNRSTKGPRAKRQKSYR.

This sequence belongs to the universal ribosomal protein uS9 family. Part of the 30S ribosomal subunit.

In Pyrococcus furiosus (strain ATCC 43587 / DSM 3638 / JCM 8422 / Vc1), this protein is Small ribosomal subunit protein uS9.